A 612-amino-acid chain; its full sequence is Probable translation initiation factor IF-2 (612 aa).

Positions 11-229 (LRQPIVVVLG…VLAGLTQRYL (219 aa)) constitute a tr-type G domain. Residues 20–27 (GHVDHGKT) form a G1 region. Residue 20 to 27 (GHVDHGKT) participates in GTP binding. The tract at residues 45-49 (LITQH) is G2. The G3 stretch occupies residues 84–87 (DTPG). Residues 84–88 (DTPGH) and 138–141 (NKID) contribute to the GTP site. Residues 138 to 141 (NKID) form a G4 region. Residues 207-209 (SAK) are G5.

This sequence belongs to the TRAFAC class translation factor GTPase superfamily. Classic translation factor GTPase family. IF-2 subfamily.

Function in general translation initiation by promoting the binding of the formylmethionine-tRNA to ribosomes. Seems to function along with eIF-2. This is Probable translation initiation factor IF-2 from Hyperthermus butylicus (strain DSM 5456 / JCM 9403 / PLM1-5).